Here is a 443-residue protein sequence, read N- to C-terminus: Glutamate--tRNA ligase 2 (443 aa).

The 'HIGH' region signature appears at 7 to 17 (PSPTGLIHVGN). A 'KMSKS' region motif is present at residues 240–244 (KLSKR). Lys-243 serves as a coordination point for ATP.

It belongs to the class-I aminoacyl-tRNA synthetase family. Glutamate--tRNA ligase type 1 subfamily. In terms of assembly, monomer.

Its subcellular location is the cytoplasm. It catalyses the reaction tRNA(Glu) + L-glutamate + ATP = L-glutamyl-tRNA(Glu) + AMP + diphosphate. In terms of biological role, catalyzes the attachment of glutamate to tRNA(Glu) in a two-step reaction: glutamate is first activated by ATP to form Glu-AMP and then transferred to the acceptor end of tRNA(Glu). The polypeptide is Glutamate--tRNA ligase 2 (Gluconacetobacter diazotrophicus (strain ATCC 49037 / DSM 5601 / CCUG 37298 / CIP 103539 / LMG 7603 / PAl5)).